Here is a 282-residue protein sequence, read N- to C-terminus: 3-methyl-2-oxobutanoate hydroxymethyltransferase (282 aa).

The Mg(2+) site is built by Asp44 and Asp83. Residues Asp44 to Ser45, Asp83, and Lys113 contribute to the 3-methyl-2-oxobutanoate site. Glu115 contributes to the Mg(2+) binding site. Glu182 functions as the Proton acceptor in the catalytic mechanism.

This sequence belongs to the PanB family. As to quaternary structure, homodecamer; pentamer of dimers. The cofactor is Mg(2+).

Its subcellular location is the cytoplasm. The enzyme catalyses 3-methyl-2-oxobutanoate + (6R)-5,10-methylene-5,6,7,8-tetrahydrofolate + H2O = 2-dehydropantoate + (6S)-5,6,7,8-tetrahydrofolate. The protein operates within cofactor biosynthesis; (R)-pantothenate biosynthesis; (R)-pantoate from 3-methyl-2-oxobutanoate: step 1/2. Functionally, catalyzes the reversible reaction in which hydroxymethyl group from 5,10-methylenetetrahydrofolate is transferred onto alpha-ketoisovalerate to form ketopantoate. This chain is 3-methyl-2-oxobutanoate hydroxymethyltransferase, found in Dehalococcoides mccartyi (strain ATCC BAA-2266 / KCTC 15142 / 195) (Dehalococcoides ethenogenes (strain 195)).